We begin with the raw amino-acid sequence, 236 residues long: MIRRYWNINLKEMLETGVHFGHATRKWNPKMAPYISAKRKGIHITNLTRTARFLSEACDLVFDAASRRKQFLIVGTKNKAADPVARAAIRARCHYVNKKWLGGLLTNWSTTEMRLQKFRDLRMEQKTGGIHRLPKGDAARLKRQLFHLQTYLGGIKYMTGLPDIVIIVDQQEEYMALQECITLGIPTICLIDTNCDPDLTDISIPANDDAIASIRLILNKLVFAICEGRSSYIRNP.

Belongs to the universal ribosomal protein uS2 family.

It localises to the plastid. It is found in the chloroplast. This is Small ribosomal subunit protein uS2c (rps2) from Populus alba (White poplar).